Here is a 159-residue protein sequence, read N- to C-terminus: Large ribosomal subunit protein mL50 (159 aa).

The protein belongs to the mitochondrion-specific ribosomal protein mL50 family. As to quaternary structure, component of the mitochondrial ribosome large subunit (39S) which comprises a 16S rRNA and about 50 distinct proteins.

The protein localises to the mitochondrion. This chain is Large ribosomal subunit protein mL50 (Mrpl50), found in Mus musculus (Mouse).